We begin with the raw amino-acid sequence, 405 residues long: MADVKKVVLAYSGGLDTSVILKWLQDTYNCEVVTFTADLGQGEEVEPARAKAQAMGVKEIYIDDLREEFVRDFVFPMFRANTVYEGEYLLGTSIARPLIAKRLIEIANETGADAISHGATGKGNDQVRFELGAYALKPGVKVIAPWREWDLLSREKLMDYAEKHGIPIERHGKKKSPYSMDANLLHISYEGGVLEDTWTEHEEDMWRWSVSPENAPDQATYIELTYRNGDIVAIDGVEKSPATVLADLNRIGGANGIGRLDIVENRYVGMKSRGCYETPGGTIMLKAHRAIESITLDREVAHLKDELMPKYASLIYTGYWWSPERLMLQQMIDASQVNVNGVVRLKLYKGNVTVVGRKSDDSLFDANIATFEEDGGAYNQADAAGFIKLNALRMRIAANKGRSLL.

ATP is bound by residues 10–18 and Ala-37; that span reads AYSGGLDTS. Residues Tyr-88 and Ser-93 each contribute to the L-citrulline site. ATP is bound at residue Gly-118. Residues Thr-120, Asn-124, and Asp-125 each coordinate L-aspartate. Asn-124 is a binding site for L-citrulline. Arg-128, Ser-179, Ser-188, Glu-264, and Tyr-276 together coordinate L-citrulline.

This sequence belongs to the argininosuccinate synthase family. Type 1 subfamily. Homotetramer.

It is found in the cytoplasm. It carries out the reaction L-citrulline + L-aspartate + ATP = 2-(N(omega)-L-arginino)succinate + AMP + diphosphate + H(+). Its pathway is amino-acid biosynthesis; L-arginine biosynthesis; L-arginine from L-ornithine and carbamoyl phosphate: step 2/3. In Pseudomonas entomophila (strain L48), this protein is Argininosuccinate synthase.